Here is a 786-residue protein sequence, read N- to C-terminus: Polyribonucleotide nucleotidyltransferase (786 aa).

Positions 516 and 522 each coordinate Mg(2+). The KH domain occupies 582-641 (PRVTTVKIPVDKIGMVIGPKGQTINAIQDETGAEISIEDDGTIYVGATNGPSAQAAVERV). One can recognise an S1 motif domain in the interval 653-722 (GDRFLGTVVK…QRGKIYLDKV (70 aa)). Residues 722-786 (VRPEGAEGPA…SRPRRRTRHS (65 aa)) form a disordered region. Positions 727-738 (AEGPAEAAATDR) are enriched in low complexity. Basic and acidic residues predominate over residues 739–778 (PAGRDRGDRAPRDRGDRGDRERGSRGPDRGDGGEGGGESR).

Belongs to the polyribonucleotide nucleotidyltransferase family. The cofactor is Mg(2+).

Its subcellular location is the cytoplasm. It carries out the reaction RNA(n+1) + phosphate = RNA(n) + a ribonucleoside 5'-diphosphate. Its function is as follows. Involved in mRNA degradation. Catalyzes the phosphorolysis of single-stranded polyribonucleotides processively in the 3'- to 5'-direction. The polypeptide is Polyribonucleotide nucleotidyltransferase (Salinispora arenicola (strain CNS-205)).